The chain runs to 503 residues: 2,3-bisphosphoglycerate-independent phosphoglycerate mutase (503 aa).

Residues Asp10 and Ser60 each contribute to the Mn(2+) site. The Phosphoserine intermediate role is filled by Ser60. Residues His121, 150-151 (RD), Arg181, Arg187, 256-259 (RPDR), and Lys330 each bind substrate. Mn(2+) is bound by residues Asp396, His400, Asp437, His438, and His455.

This sequence belongs to the BPG-independent phosphoglycerate mutase family. In terms of assembly, monomer. It depends on Mn(2+) as a cofactor.

The enzyme catalyses (2R)-2-phosphoglycerate = (2R)-3-phosphoglycerate. The protein operates within carbohydrate degradation; glycolysis; pyruvate from D-glyceraldehyde 3-phosphate: step 3/5. In terms of biological role, catalyzes the interconversion of 2-phosphoglycerate and 3-phosphoglycerate. The sequence is that of 2,3-bisphosphoglycerate-independent phosphoglycerate mutase from Mycoplasmoides gallisepticum (strain R(low / passage 15 / clone 2)) (Mycoplasma gallisepticum).